A 443-amino-acid polypeptide reads, in one-letter code: Threonine/serine transporter TdcC (443 aa).

Helical transmembrane passes span Thr22–Ile42, Ala44–Phe64, Gly97–Val117, Phe140–Met160, Val163–Ile183, Ile207–Ile227, Met261–Ala281, Ala319–Leu339, Ile366–Leu386, Ile389–Ile409, and Asp423–Phe443.

This sequence belongs to the amino acid/polyamine transporter 2 family. SdaC/TdcC subfamily.

Its subcellular location is the cell inner membrane. The catalysed reaction is L-threonine(in) + H(+)(in) = L-threonine(out) + H(+)(out). It carries out the reaction L-serine(in) + H(+)(in) = L-serine(out) + H(+)(out). Functionally, involved in the import of threonine and serine into the cell, with the concomitant import of a proton (symport system). The chain is Threonine/serine transporter TdcC from Citrobacter koseri (strain ATCC BAA-895 / CDC 4225-83 / SGSC4696).